Here is a 334-residue protein sequence, read N- to C-terminus: Holliday junction branch migration complex subunit RuvB (334 aa).

Residues 4–184 are large ATPase domain (RuvB-L); sequence EDRLISGTQK…FGIVQRLEYY (181 aa). Residues isoleucine 23, arginine 24, glycine 65, lysine 68, threonine 69, threonine 70, 131–133, arginine 174, tyrosine 184, and arginine 221 contribute to the ATP site; that span reads EDY. Threonine 69 serves as a coordination point for Mg(2+). Residues 185–255 form a small ATPAse domain (RuvB-S) region; that stretch reads DLKSLTRIVL…VAKLALDMLE (71 aa). The head domain (RuvB-H) stretch occupies residues 258-334; the sequence is NEGFDYMDRK…YLHFGFDKPQ (77 aa). The DNA site is built by arginine 313 and arginine 318.

It belongs to the RuvB family. Homohexamer. Forms an RuvA(8)-RuvB(12)-Holliday junction (HJ) complex. HJ DNA is sandwiched between 2 RuvA tetramers; dsDNA enters through RuvA and exits via RuvB. An RuvB hexamer assembles on each DNA strand where it exits the tetramer. Each RuvB hexamer is contacted by two RuvA subunits (via domain III) on 2 adjacent RuvB subunits; this complex drives branch migration. In the full resolvosome a probable DNA-RuvA(4)-RuvB(12)-RuvC(2) complex forms which resolves the HJ.

The protein resides in the cytoplasm. It carries out the reaction ATP + H2O = ADP + phosphate + H(+). In terms of biological role, the RuvA-RuvB-RuvC complex processes Holliday junction (HJ) DNA during genetic recombination and DNA repair, while the RuvA-RuvB complex plays an important role in the rescue of blocked DNA replication forks via replication fork reversal (RFR). RuvA specifically binds to HJ cruciform DNA, conferring on it an open structure. The RuvB hexamer acts as an ATP-dependent pump, pulling dsDNA into and through the RuvAB complex. RuvB forms 2 homohexamers on either side of HJ DNA bound by 1 or 2 RuvA tetramers; 4 subunits per hexamer contact DNA at a time. Coordinated motions by a converter formed by DNA-disengaged RuvB subunits stimulates ATP hydrolysis and nucleotide exchange. Immobilization of the converter enables RuvB to convert the ATP-contained energy into a lever motion, pulling 2 nucleotides of DNA out of the RuvA tetramer per ATP hydrolyzed, thus driving DNA branch migration. The RuvB motors rotate together with the DNA substrate, which together with the progressing nucleotide cycle form the mechanistic basis for DNA recombination by continuous HJ branch migration. Branch migration allows RuvC to scan DNA until it finds its consensus sequence, where it cleaves and resolves cruciform DNA. This Psychromonas ingrahamii (strain DSM 17664 / CCUG 51855 / 37) protein is Holliday junction branch migration complex subunit RuvB.